Reading from the N-terminus, the 264-residue chain is MKPTTIASLQKCKQDKKRFATITAYDYSFAKLFADEGLNVMLVGDSLGMTVQGHDSTLPVTVEDIAYHTAAVRRGAPNCLLLADLPFMAYATPEQAFENAATVMRAGANMVKIEGGEWLVETVKMLTERAVPVCGHLGLTPQSVNIFGGYKVQGRGDEAGDQLLSDALALEAAGAQLLVLECVPVELAKRITDALAIPVIGIGAGNVTDGQILVMHDAFGITGGHIPKFAKNFLAETGDIRAAVRQYMAEVESGVYPGEEHSFH.

D45 and D84 together coordinate Mg(2+). Residues D45–S46, D84, and K112 each bind 3-methyl-2-oxobutanoate. A Mg(2+)-binding site is contributed by E114. The Proton acceptor role is filled by E181.

Belongs to the PanB family. In terms of assembly, homodecamer; pentamer of dimers. Mg(2+) is required as a cofactor.

It localises to the cytoplasm. The catalysed reaction is 3-methyl-2-oxobutanoate + (6R)-5,10-methylene-5,6,7,8-tetrahydrofolate + H2O = 2-dehydropantoate + (6S)-5,6,7,8-tetrahydrofolate. It functions in the pathway cofactor biosynthesis; (R)-pantothenate biosynthesis; (R)-pantoate from 3-methyl-2-oxobutanoate: step 1/2. In terms of biological role, catalyzes the reversible reaction in which hydroxymethyl group from 5,10-methylenetetrahydrofolate is transferred onto alpha-ketoisovalerate to form ketopantoate. The sequence is that of 3-methyl-2-oxobutanoate hydroxymethyltransferase from Escherichia coli O8 (strain IAI1).